We begin with the raw amino-acid sequence, 91 residues long: Early E3B 10.4 kDa protein (91 aa).

The signal sequence occupies residues 1-22 (MIPRVFILLTLVALFCACSTLA). Residues 23-34 (AVSHIEVDCIPA) lie on the Lumenal side of the membrane. The helical transmembrane segment at 35-60 (FTVYLLYGFVTLTLICSLITVVIAFI) threads the bilayer. Residues 61-91 (QCIDWVCVRFAYLRHHPQYRDRTIAELLRIL) are Cytoplasmic-facing.

It belongs to the adenoviridae E3B family.

Its subcellular location is the host endoplasmic reticulum membrane. Down-regulates the EGF receptor. In Homo sapiens (Human), this protein is Early E3B 10.4 kDa protein.